Consider the following 376-residue polypeptide: Serpin B6 (376 aa).

Met-1 is modified (N-acetylmethionine). Ser-151 carries the phosphoserine modification. Lys-195 bears the N6-acetyllysine mark.

This sequence belongs to the serpin family. Ov-serpin subfamily. As to quaternary structure, forms a complex with the monomeric form of beta-tryptase.

The protein resides in the cytoplasm. In terms of biological role, inhibitor of cathepsin G, kallikrein-8 and thrombin. May play an important role in the inner ear in the protection against leakage of lysosomal content during stress. May be involved in the regulation of serine proteinases present in the brain or extravasated from the blood. The sequence is that of Serpin B6 (SERPINB6) from Macaca fascicularis (Crab-eating macaque).